A 249-amino-acid chain; its full sequence is Phosphoribosylaminoimidazole-succinocarboxamide synthase (249 aa).

This sequence belongs to the SAICAR synthetase family.

The enzyme catalyses 5-amino-1-(5-phospho-D-ribosyl)imidazole-4-carboxylate + L-aspartate + ATP = (2S)-2-[5-amino-1-(5-phospho-beta-D-ribosyl)imidazole-4-carboxamido]succinate + ADP + phosphate + 2 H(+). It participates in purine metabolism; IMP biosynthesis via de novo pathway; 5-amino-1-(5-phospho-D-ribosyl)imidazole-4-carboxamide from 5-amino-1-(5-phospho-D-ribosyl)imidazole-4-carboxylate: step 1/2. This chain is Phosphoribosylaminoimidazole-succinocarboxamide synthase, found in Roseiflexus castenholzii (strain DSM 13941 / HLO8).